Here is a 205-residue protein sequence, read N- to C-terminus: Protein-L-isoaspartate O-methyltransferase (205 aa).

Serine 56 is an active-site residue.

Belongs to the methyltransferase superfamily. L-isoaspartyl/D-aspartyl protein methyltransferase family.

The protein resides in the cytoplasm. It catalyses the reaction [protein]-L-isoaspartate + S-adenosyl-L-methionine = [protein]-L-isoaspartate alpha-methyl ester + S-adenosyl-L-homocysteine. In terms of biological role, catalyzes the methyl esterification of L-isoaspartyl residues in peptides and proteins that result from spontaneous decomposition of normal L-aspartyl and L-asparaginyl residues. It plays a role in the repair and/or degradation of damaged proteins. This Aeromonas salmonicida (strain A449) protein is Protein-L-isoaspartate O-methyltransferase.